The chain runs to 804 residues: MLVSYNWLQDFLNLDQEPHALAEKITRTGVEIADVKHPEEGLKKLVVGKVIDCEGVEGTHLHLTHVDVGEDEPLQIVCGAPNVAAGELVIVALHGARIAGNEKIKKGKIRGIESYGMICGLQEIGFSDSVVPEEFADGIYVFPEDADVKPGQDVYEALGMDDYILDFDITPNRADTLGMEGAAYEVGAIVDQKPKIGDVVLKEDGPDWTSSLEANVDEKLAPKFYLRKLTGVKIQPSPLWMQRRLWNAGIRPINNVVDVTNYVMLLTGQPMHAYDAKTFETGKLEVRLANKGEKLTLLNEKEVELDPRDIIITDGEKPVMMAGVMGGLNSEITSETTDVILESAIFDPTLVRKSALRHANRTEASSRYEKGVNWDATEKAINMAALLLRNDAQATIDEGIIKATDTKREPVVVKTTVSHINDVLGSEISAEEMIKIFDRLGFVVDQDGDNIAVHVPNRRWDISIPADLVEEVGRIYGYDNLKSTQPLLAETHGGYSEKEEMMRRMKAIVEGQGLMEAISYSLTSPEKAVRYTKDPKDIVKVQMPLNSSRSVMRQNLMTGLVDAASYNFARKQTQLALFEQGRVYDHEGGTFNEHEHLAALYSGNTFAENWQHLTQKVDFYFVKGQLTNLFTAIGIDPEKVTYEAAPILGMHPTRTAAIYIDKQYVGMIGMIAHAVTLADKALRGAELYGYEINLDTIIPMLTKGMTAVPAPKFPAIERDLSLLVDKEITNQEVENVIKSNAGKYLVDLKVIDVYEGSHIAIGKKSFAYNLTFLNRKDTLTDKVVNNAMDKIIAGLENDLDIKVR.

The 117-residue stretch at 39–155 (EEGLKKLVVG…ADVKPGQDVY (117 aa)) folds into the tRNA-binding domain. The region spanning 408–483 (REPVVVKTTV…RIYGYDNLKS (76 aa)) is the B5 domain. Mg(2+)-binding residues include aspartate 461, aspartate 467, glutamate 470, and glutamate 471. An FDX-ACB domain is found at 711–804 (PKFPAIERDL…LENDLDIKVR (94 aa)).

The protein belongs to the phenylalanyl-tRNA synthetase beta subunit family. Type 1 subfamily. Tetramer of two alpha and two beta subunits. Mg(2+) is required as a cofactor.

Its subcellular location is the cytoplasm. The enzyme catalyses tRNA(Phe) + L-phenylalanine + ATP = L-phenylalanyl-tRNA(Phe) + AMP + diphosphate + H(+). The chain is Phenylalanine--tRNA ligase beta subunit from Lactobacillus acidophilus (strain ATCC 700396 / NCK56 / N2 / NCFM).